A 102-amino-acid polypeptide reads, in one-letter code: ATP-dependent Clp protease adapter protein ClpS (102 aa).

It belongs to the ClpS family. In terms of assembly, binds to the N-terminal domain of the chaperone ClpA.

Functionally, involved in the modulation of the specificity of the ClpAP-mediated ATP-dependent protein degradation. This Shewanella denitrificans (strain OS217 / ATCC BAA-1090 / DSM 15013) protein is ATP-dependent Clp protease adapter protein ClpS.